We begin with the raw amino-acid sequence, 463 residues long: Ammonium transporter 1 (463 aa).

At 1–39 (MVAGEIIKGVAAEITNGSSSSVVQKYLDCANQVAPDPGN) the chain is on the extracellular side. Residues 40–60 (TTWVLLSTILVLGMMPALAFF) form a helical membrane-spanning segment. Topologically, residues 61 to 76 (EAGLLRSKNTLSIITQ) are cytoplasmic. A helical transmembrane segment spans residues 77–97 (IMSGIVVLTVMWQAFGYSLTF). Over 98–127 (GPDQKGIIGNLDHAFLINVSYDDCSPNAPN) the chain is Extracellular. The chain crosses the membrane as a helical span at residues 128-148 (IPAAAYAFFMMMFANITPLLM). The Cytoplasmic segment spans residues 149 to 160 (TGAFAERVKFKA). Residues 161-181 (FIALTVAWEIIVFYPVAHWIW) traverse the membrane as a helical segment. The Extracellular portion of the chain corresponds to 182–194 (GGGWLHKYFGVLD). Residues 195 to 215 (FAGGIVIHTSAGVSALVIALY) form a helical membrane-spanning segment. The Cytoplasmic portion of the chain corresponds to 216–233 (VGRRKDFEKYGGEFPPSN). The chain crosses the membrane as a helical span at residues 234 to 254 (LPLATIGAALLWMGWFGFNAG). The Extracellular segment spans residues 255–265 (SALAAGNIATS). Residues 266 to 286 (AVASTQIGGSFSAIVWIILSA) traverse the membrane as a helical segment. Topologically, residues 287-293 (AKGKPNT) are cytoplasmic. Residues 294–314 (VSVINGVIAGLAGITPASGYI) traverse the membrane as a helical segment. Over 315–316 (NS) the chain is Extracellular. Residues 317-337 (QYSIGLGICLGLASYYSVVLL) traverse the membrane as a helical segment. The Cytoplasmic portion of the chain corresponds to 338–351 (KHKLHIDDALDVSS). Residues 352 to 372 (VHGLTGIIGSLAIGFCAELSV) form a helical membrane-spanning segment. The Extracellular portion of the chain corresponds to 373 to 392 (NPNGANGAFYGNPKLIGTQL). Residues 393-413 (LGVVSVAVWAAAWTWVLLKII) traverse the membrane as a helical segment. At 414 to 463 (DATIGVKIDESEEELGLDLVEHGEFAYHNISLQGNENHYSSVINSHDFFK) the chain is on the cytoplasmic side.

This sequence belongs to the ammonia transporter channel (TC 1.A.11.2) family.

It localises to the cell membrane. The protein localises to the endosome membrane. The protein resides in the lysosome membrane. It is found in the cytoplasmic vesicle. Its subcellular location is the phagosome membrane. In terms of biological role, ammonium transporter that mediates the excretion of ammonium. Controls ammonium homeostasis during growth and development. Ammonium has been shown to function as a morphogen at multiple steps during the development. The sequence is that of Ammonium transporter 1 (amtA) from Dictyostelium discoideum (Social amoeba).